The following is a 530-amino-acid chain: UPF0422 protein lpg2959 (530 aa).

Positions 1-19 are cleaved as a signal peptide; the sequence is MKFKKIILALACLSSPLYA. Positions 20-66 form a coiled coil; it reads DQDQQLKSEIQRLQHQAEDLQAQLNRLQKQLANHKSSQQKHEQQAAA. Residues 50-81 form a disordered region; the sequence is LANHKSSQQKHEQQAAAKPAEPQSKPTVKSGA. Residues 63–75 show a composition bias toward low complexity; it reads QAAAKPAEPQSKP.

Belongs to the UPF0422 family.

This is UPF0422 protein lpg2959 from Legionella pneumophila subsp. pneumophila (strain Philadelphia 1 / ATCC 33152 / DSM 7513).